The sequence spans 20 residues: Bulb protein (20 aa).

The segment at 1–20 (APDVHTRXTQNGLPPGXLPS) is disordered.

This Narcissus pseudonarcissus (Daffodil) protein is Bulb protein.